A 188-amino-acid polypeptide reads, in one-letter code: dCTP deaminase (188 aa).

DCTP is bound by residues K111–R116, T135–E137, Q156, Y170, and Q180. The Proton donor/acceptor role is filled by E137.

It belongs to the dCTP deaminase family. As to quaternary structure, homotrimer.

It catalyses the reaction dCTP + H2O + H(+) = dUTP + NH4(+). Its pathway is pyrimidine metabolism; dUMP biosynthesis; dUMP from dCTP (dUTP route): step 1/2. Its function is as follows. Catalyzes the deamination of dCTP to dUTP. The protein is dCTP deaminase of Pseudomonas aeruginosa (strain UCBPP-PA14).